A 491-amino-acid polypeptide reads, in one-letter code: 3-epi-6-deoxocathasterone 23-monooxygenase CYP90D1 (491 aa).

The chain crosses the membrane as a helical span at residues 7-27; sequence LLFFSFFFFIIIVIFNKINGL. A heme-binding site is contributed by cysteine 442.

Belongs to the cytochrome P450 family. Heme serves as cofactor. As to expression, expressed in leaf vascular tissue.

Its subcellular location is the endoplasmic reticulum membrane. It catalyses the reaction 3-epi-6-deoxocathasterone + reduced [NADPH--hemoprotein reductase] + O2 = 6-deoxotyphasterol + oxidized [NADPH--hemoprotein reductase] + H2O + H(+). The catalysed reaction is (22S,24R)-22-hydroxy-5alpha-ergostan-3-one + reduced [NADPH--hemoprotein reductase] + O2 = 3-dehydro-6-deoxoteasterone + oxidized [NADPH--hemoprotein reductase] + H2O + H(+). It participates in plant hormone biosynthesis; brassinosteroid biosynthesis. Its function is as follows. Involved in brassinosteroid (BR) biosynthesis. May convert teasterone (TE) to 3-dehydroteasterone (3DT, 3-DHT), or 6-deoxoteasterone (6-deoxoTE) to 3-dehydro-6-deoxoteasterone (6-deoxo3DT, 6-deoxo3DHT). C-23 hydroxylase that converts directly (22S,24R)-22-hydroxy-5-alpha-ergostan-3-one and 3-epi-6-deoxocathasterone to 3-dehydro-6-deoxoteasterone (6-deoxo3DT, 6-deoxo3DHT) and 6-deoxotyphasterol (6-deoxoTY), respectively. These C-23 hydroxylation shortcuts bypass campestanol, 6-deoxocathasterone, and 6-deoxoteasterone (6-deoxoTE). Also catalyzes the conversion of cathasterone to teasterone (TE), 6-deoxotyphasterol (6-deoxoTY) to 6-deoxocathasterone (6-deoxoCT), (22S,24R)-22-hydroxyergost-4-en-3-one (22-OH-4-en-3-one) to (22R,23R)-22,23-dihydroxy-campest-4-en-3-one (22,23-diOH-4-en-3-one) and (22S)-22-hydroxycampesterol (22-OHCR) to (22R,23R)-22,23-dihydroxycampesterol (22,23-diOHCR). The sequence is that of 3-epi-6-deoxocathasterone 23-monooxygenase CYP90D1 from Arabidopsis thaliana (Mouse-ear cress).